Reading from the N-terminus, the 31-residue chain is GDLPICGETCFEGGNCRIPGCTCVWPFCSKN.

The cyclopeptide (Gly-Asn) cross-link spans 1 to 31 (GDLPICGETCFEGGNCRIPGCTCVWPFCSKN). Intrachain disulfides connect C6-C21, C10-C23, and C16-C28.

This is a cyclic peptide.

In terms of biological role, probably participates in a plant defense mechanism. This is Cyclotide glopa C from Gloeospermum pauciflorum.